Here is a 117-residue protein sequence, read N- to C-terminus: Large ribosomal subunit protein bL20 (117 aa).

The protein belongs to the bacterial ribosomal protein bL20 family.

Its function is as follows. Binds directly to 23S ribosomal RNA and is necessary for the in vitro assembly process of the 50S ribosomal subunit. It is not involved in the protein synthesizing functions of that subunit. The protein is Large ribosomal subunit protein bL20 of Citrifermentans bemidjiense (strain ATCC BAA-1014 / DSM 16622 / JCM 12645 / Bem) (Geobacter bemidjiensis).